The sequence spans 26 residues: Dermaseptin-J1 (26 aa).

A Valine amide modification is found at V26.

Expressed by the skin glands.

The protein resides in the secreted. Functionally, has antimicrobial activity. The polypeptide is Dermaseptin-J1 (Phasmahyla jandaia (Jandaia leaf frog)).